Reading from the N-terminus, the 492-residue chain is uncharacterized protein (492 aa).

Helical transmembrane passes span 13-33 (LGFILASVGSAIGLGNIWRFG), 42-62 (GAFLIPYIVALLCVGIPLMIL), 97-117 (FIITSYYVVIIAWCLYYLIIL), 150-170 (GILVSTLAVWGIVALILSAGI), 180-200 (IMIPFLLFLIILLVLNALTLP), 222-242 (VWLSAFSQIFFSLSLGFGILI), 258-278 (AVTVSLLNCGFSFLAGFAVFG), 320-340 (FGIVFFLALVFAGISSAVSIV), 359-379 (LLAVLALFIIISPIFTTGAGL), 391-411 (GYLLPIAAILEIIIAIWLFGG), 428-448 (VWWKYLAGVVSPIILTAVVFL), and 463-483 (TTYVIFGALIIPLAFVVSVIL).

The protein belongs to the sodium:neurotransmitter symporter (SNF) (TC 2.A.22) family.

The protein localises to the cell membrane. In terms of biological role, putative sodium-dependent transporter. This is an uncharacterized protein from Methanocaldococcus jannaschii (strain ATCC 43067 / DSM 2661 / JAL-1 / JCM 10045 / NBRC 100440) (Methanococcus jannaschii).